A 194-amino-acid polypeptide reads, in one-letter code: Mpv17-like protein (194 aa).

At 1–14 (MASWWRAFPQAARR) the chain is on the cytoplasmic side. The chain crosses the membrane as a helical span at residues 15-34 (YPWPTNVLLYAGLFSAGDAL). A targeting to peroxisomes region spans residues 16-55 (PWPTNVLLYAGLFSAGDALQQRLRGGPADWRQTRRVATLA). Over 35–50 (QQRLRGGPADWRQTRR) the chain is Lumenal. The helical transmembrane segment at 51–67 (VATLAVTFHGNFNYVWL) threads the bilayer. The Cytoplasmic portion of the chain corresponds to 68–91 (RLLERALPGRAPRTVLAKVLCDQT). Residues 92-110 (VGGPIALSAFYVGMSVLQG) form a helical membrane-spanning segment. The Lumenal segment spans residues 111 to 150 (KDDIFLDLKQKFWNTYKSGLMYWPFVQLTNFSLVPVHWRT). A helical membrane pass occupies residues 151 to 168 (AYTGLCAFLWATFLCFSQ). Residues 169–194 (QSGDGTLQSIFIFLRRKEASDKSPEK) are Cytoplasmic-facing.

It belongs to the peroxisomal membrane protein PXMP2/4 family. Isoform 1 and isoform 3 are expressed in the kidney (at protein level). Isoform 1 is expressed in the kidney, spleen, heart, brain, lung and liver. Isoform 3 is expressed in the kidney. Isoform 1 and isoform 3 expression increase during development, reache their highest level in adulthood and decrease with aging.

It localises to the peroxisome membrane. The protein resides in the cytoplasm. In terms of biological role, participates in reactive oxygen species metabolism by up- or down-regulation of the genes of antioxidant enzymes. Protective against the mitochondrial apoptotic cascade. Its function is as follows. Participates in reactive oxygen species metabolism by up- or down-regulation of the genes of antioxidant enzymes. The chain is Mpv17-like protein (Mpv17l) from Mus musculus (Mouse).